Consider the following 1692-residue polypeptide: Flagellar attachment zone protein 1 (1692 aa).

Coiled-coil stretches lie at residues 613–657 (REQE…KLQK), 684–864 (VTLD…HKVR), and 903–1607 (NDHM…SALE). Repeat copies occupy residues 1012–1025 (EELE…EKLA), 1026–1039 (EELE…EKLA), 1040–1053 (EELE…EKLA), 1054–1067 (EELE…EKLA), 1068–1081 (EELE…EKLA), 1082–1095 (EELE…EKLA), 1096–1109 (EELE…EKLA), 1110–1123 (EELE…EKLA), 1124–1137 (EELE…EKLA), 1138–1151 (EELE…EKLA), 1152–1165 (EELE…EKLA), 1166–1179 (EELE…EKLA), 1180–1193 (EELE…EKLA), 1194–1207 (EELE…EKLA), 1208–1221 (EELE…EKLA), 1222–1235 (EELE…EKLA), 1236–1249 (EELE…EKLA), 1250–1263 (EELE…EKLA), 1264–1277 (EELE…EKLA), 1278–1291 (EELE…EKLA), 1292–1305 (EELE…EKLA), 1306–1319 (EELE…EKLA), 1320–1333 (EELE…EKLA), 1334–1347 (EELE…EKLA), 1348–1361 (EELE…EKLA), 1362–1375 (EELE…EKLA), 1376–1389 (EELE…EKLA), 1390–1403 (EELE…EKLA), 1404–1417 (EELE…EKLA), 1418–1431 (EELE…EKLA), 1432–1445 (EELE…EKLA), 1446–1459 (EELE…EKLA), 1460–1473 (EELE…EKLA), 1474–1487 (EELE…EKLA), 1488–1501 (EELE…EKLA), 1502–1515 (EELE…EKLA), and 1516–1529 (EELE…KRLA). Residues 1012–1529 (EELELKAAEN…LKVAENKRLA (518 aa)) are 37 X 14 AA tandem repeats of E-E-L-E-L-K-[VA]-A-E-N-E-K-L-A.

The protein localises to the cell projection. The protein resides in the cilium. It localises to the flagellum. Its function is as follows. A component of FAZ filament that is required for correct FAZ assembly and attachment. Not essential for new flagellum growth. This Trypanosoma brucei brucei (strain 927/4 GUTat10.1) protein is Flagellar attachment zone protein 1.